The chain runs to 288 residues: Nucleotide-binding protein Gura_2968 (288 aa).

ATP is bound at residue 8–15 (GLSGSGKS). 59–62 (DIRG) lines the GTP pocket.

This sequence belongs to the RapZ-like family.

Functionally, displays ATPase and GTPase activities. The polypeptide is Nucleotide-binding protein Gura_2968 (Geotalea uraniireducens (strain Rf4) (Geobacter uraniireducens)).